A 676-amino-acid polypeptide reads, in one-letter code: Urocanate hydratase (676 aa).

Residues glycine 126–glycine 127, glutamine 204, glycine 251–serine 253, glutamate 271, asparagine 317–valine 318, glutamine 343–histidine 347, tyrosine 354–tyrosine 355, and tyrosine 403 contribute to the NAD(+) site. N6-succinyllysine is present on lysine 534. Glycine 594 is an NAD(+) binding site.

Belongs to the urocanase family. Requires NAD(+) as cofactor.

The enzyme catalyses 4-imidazolone-5-propanoate = trans-urocanate + H2O. The protein operates within amino-acid degradation; L-histidine degradation into L-glutamate; N-formimidoyl-L-glutamate from L-histidine: step 2/3. This chain is Urocanate hydratase (Uroc1), found in Mus musculus (Mouse).